Consider the following 296-residue polypeptide: Fructose-bisphosphate aldolase class 1 (296 aa).

Residue Glu-175 is the Proton acceptor of the active site. The active-site Schiff-base intermediate with dihydroxyacetone-P is Lys-212.

Belongs to the class I fructose-bisphosphate aldolase family.

It carries out the reaction beta-D-fructose 1,6-bisphosphate = D-glyceraldehyde 3-phosphate + dihydroxyacetone phosphate. The protein operates within carbohydrate degradation; glycolysis; D-glyceraldehyde 3-phosphate and glycerone phosphate from D-glucose: step 4/4. This Staphylococcus aureus (strain Mu3 / ATCC 700698) protein is Fructose-bisphosphate aldolase class 1.